Reading from the N-terminus, the 336-residue chain is UPF0324 membrane protein spr0034 (336 aa).

8 helical membrane passes run 65 to 84, 91 to 113, 118 to 140, 153 to 175, 211 to 233, 249 to 271, 286 to 305, and 312 to 334; these read LLQYAVVLLGFGLNISQVFA, PVILSTISIALIIAYLFQRFFAL, ATLVGVGSSICGGSAIAATAPVI, VIFFFNVLAALIFPTLGTWLHLS, SATIVKLTRTLAIIPITLFLSYW, VFPLFILYFILASLLTTLLTSLG, FLIVMAMSAIGLKTNLVAMV, and ILLGAICWIAIILTTLGMQTLIG.

This sequence belongs to the UPF0324 family.

The protein resides in the cell membrane. The sequence is that of UPF0324 membrane protein spr0034 from Streptococcus pneumoniae (strain ATCC BAA-255 / R6).